Here is a 336-residue protein sequence, read N- to C-terminus: USG-1 protein homolog (336 aa).

This sequence belongs to the aspartate-semialdehyde dehydrogenase family.

This Pseudomonas aeruginosa (strain ATCC 15692 / DSM 22644 / CIP 104116 / JCM 14847 / LMG 12228 / 1C / PRS 101 / PAO1) protein is USG-1 protein homolog (usg).